Here is a 456-residue protein sequence, read N- to C-terminus: Kynurenine 3-monooxygenase (456 aa).

The protein belongs to the aromatic-ring hydroxylase family. KMO subfamily. It depends on FAD as a cofactor.

It localises to the mitochondrion outer membrane. The enzyme catalyses L-kynurenine + NADPH + O2 + H(+) = 3-hydroxy-L-kynurenine + NADP(+) + H2O. The protein operates within cofactor biosynthesis; NAD(+) biosynthesis; quinolinate from L-kynurenine: step 1/3. In terms of biological role, catalyzes the hydroxylation of L-kynurenine (L-Kyn) to form 3-hydroxy-L-kynurenine (L-3OHKyn). Required for synthesis of quinolinic acid. The chain is Kynurenine 3-monooxygenase from Candida albicans (strain SC5314 / ATCC MYA-2876) (Yeast).